Here is a 293-residue protein sequence, read N- to C-terminus: 4-diphosphocytidyl-2-C-methyl-D-erythritol kinase (293 aa).

Residue lysine 10 is part of the active site. 94 to 104 (PVSAGLAGGSS) contributes to the ATP binding site. Aspartate 136 is a catalytic residue.

It belongs to the GHMP kinase family. IspE subfamily.

It carries out the reaction 4-CDP-2-C-methyl-D-erythritol + ATP = 4-CDP-2-C-methyl-D-erythritol 2-phosphate + ADP + H(+). The protein operates within isoprenoid biosynthesis; isopentenyl diphosphate biosynthesis via DXP pathway; isopentenyl diphosphate from 1-deoxy-D-xylulose 5-phosphate: step 3/6. Functionally, catalyzes the phosphorylation of the position 2 hydroxy group of 4-diphosphocytidyl-2C-methyl-D-erythritol. The chain is 4-diphosphocytidyl-2-C-methyl-D-erythritol kinase from Listeria monocytogenes serotype 4b (strain CLIP80459).